Here is a 647-residue protein sequence, read N- to C-terminus: MINITFPDGAIREFESGVTTFEIAQSISNSLAKKALAGKFNGKLIDTTRAITEDGSIEIVTPDHEDALPILRHSAAHLFAQAARRLFPDIHLGVGPAIEDGFYYDTDNTAGQISNEDLPRIEEEMQKIVKENFPSIREEVTKDEAREIFKNDPYKLELIEEHSEDEGGLTIYRQGEYVDLCRGPHVPSTGRIQIFHLLHVAGAYWRGNSDNAMMQRIYGTAWFDKKDLKNYLQMREEAKERDHRKLGKELDLFMISQEVGQGLPFWLPNGATIRRELERYIVNKELASGYQHVYTPPLASVELYKTSGHWDHYQEDMFPTMDMGDGEEFVLRPMNCPHHIQVFKHHVHSYRELPIRIAEIGMMHRYEKSGALTGLQRVREMSLNDGHLFVTPEQIQEEFQRALQLIIDVYEDFNLTDYRFRLSLRDPQDTHKYFDNDEMWENAQTMLRAALDEMGVDYFEAEGEAAFYGPKLDIQIKTALGKEETLSTIQLDFLLPERFDLKYIGADGEDHRPVMIHRGVISTMERFTAILIENYKGAFPTWLAPHQVTLIPVSNEKHVDYAWEVAKKLRDRGVRADVDERNEKMQFKIRASQTSKIPYQLIVGDKEMEDETVNVRRYGQKETQTVSVDNFVQAILADIANKSRVEK.

The 61-residue stretch at 1-61 (MINITFPDGA…TEDGSIEIVT (61 aa)) folds into the TGS domain. Residues 242–540 (DHRKLGKELD…LIENYKGAFP (299 aa)) are catalytic. 3 residues coordinate Zn(2+): Cys336, His387, and His517.

This sequence belongs to the class-II aminoacyl-tRNA synthetase family. Homodimer. Zn(2+) serves as cofactor.

The protein localises to the cytoplasm. The catalysed reaction is tRNA(Thr) + L-threonine + ATP = L-threonyl-tRNA(Thr) + AMP + diphosphate + H(+). Catalyzes the attachment of threonine to tRNA(Thr) in a two-step reaction: L-threonine is first activated by ATP to form Thr-AMP and then transferred to the acceptor end of tRNA(Thr). Also edits incorrectly charged L-seryl-tRNA(Thr). This Streptococcus pneumoniae serotype 19F (strain G54) protein is Threonine--tRNA ligase.